The sequence spans 78 residues: Acyl carrier protein (78 aa).

Residues 2 to 77 (SDIASRVKAI…QAISYIEEAK (76 aa)) enclose the Carrier domain. Serine 37 carries the O-(pantetheine 4'-phosphoryl)serine modification.

It belongs to the acyl carrier protein (ACP) family. Post-translationally, 4'-phosphopantetheine is transferred from CoA to a specific serine of apo-ACP by AcpS. This modification is essential for activity because fatty acids are bound in thioester linkage to the sulfhydryl of the prosthetic group.

The protein localises to the cytoplasm. It participates in lipid metabolism; fatty acid biosynthesis. Carrier of the growing fatty acid chain in fatty acid biosynthesis. The protein is Acyl carrier protein of Flavobacterium johnsoniae (strain ATCC 17061 / DSM 2064 / JCM 8514 / BCRC 14874 / CCUG 350202 / NBRC 14942 / NCIMB 11054 / UW101) (Cytophaga johnsonae).